The chain runs to 338 residues: Tryptophan--tRNA ligase (338 aa).

ATP-binding positions include 11 to 13 (QPS) and 19 to 20 (GN). Residues 12–20 (PSGELSIGN) carry the 'HIGH' region motif. Asp135 is an L-tryptophan binding site. ATP is bound by residues 147-149 (GSD), Val189, and 198-202 (KMSKS). The 'KMSKS' region signature appears at 198–202 (KMSKS).

The protein belongs to the class-I aminoacyl-tRNA synthetase family. As to quaternary structure, homodimer.

It localises to the cytoplasm. It carries out the reaction tRNA(Trp) + L-tryptophan + ATP = L-tryptophyl-tRNA(Trp) + AMP + diphosphate + H(+). Functionally, catalyzes the attachment of tryptophan to tRNA(Trp). The sequence is that of Tryptophan--tRNA ligase from Aliivibrio fischeri (strain ATCC 700601 / ES114) (Vibrio fischeri).